A 631-amino-acid polypeptide reads, in one-letter code: Phosphomethylpyrimidine synthase (631 aa).

Substrate contacts are provided by residues asparagine 239, methionine 268, tyrosine 297, histidine 333, 353-355 (SRG), 394-397 (DGLR), and glutamate 433. Histidine 437 contacts Zn(2+). Residue tyrosine 460 participates in substrate binding. Histidine 501 contacts Zn(2+). Cysteine 581, cysteine 584, and cysteine 589 together coordinate [4Fe-4S] cluster.

It belongs to the ThiC family. As to quaternary structure, homodimer. [4Fe-4S] cluster is required as a cofactor.

It catalyses the reaction 5-amino-1-(5-phospho-beta-D-ribosyl)imidazole + S-adenosyl-L-methionine = 4-amino-2-methyl-5-(phosphooxymethyl)pyrimidine + CO + 5'-deoxyadenosine + formate + L-methionine + 3 H(+). It participates in cofactor biosynthesis; thiamine diphosphate biosynthesis. Functionally, catalyzes the synthesis of the hydroxymethylpyrimidine phosphate (HMP-P) moiety of thiamine from aminoimidazole ribotide (AIR) in a radical S-adenosyl-L-methionine (SAM)-dependent reaction. This Salmonella dublin (strain CT_02021853) protein is Phosphomethylpyrimidine synthase.